The chain runs to 254 residues: L-erythrulose-1-phosphate isomerase (254 aa).

The Electrophile role is filled by histidine 97. Glutamate 170 acts as the Proton acceptor in catalysis. 2 residues coordinate substrate: glycine 176 and serine 213.

This sequence belongs to the triosephosphate isomerase family. As to quaternary structure, homodimer.

The protein localises to the cytoplasm. It catalyses the reaction L-erythrulose 1-phosphate = D-erythrulose 4-phosphate. Its pathway is carbohydrate metabolism; erythritol degradation. Its function is as follows. Catalyzes the isomerization of D-erythrulose-4P to L-erythrulose-1P. This Mesorhizobium japonicum (strain LMG 29417 / CECT 9101 / MAFF 303099) (Mesorhizobium loti (strain MAFF 303099)) protein is L-erythrulose-1-phosphate isomerase.